Here is a 648-residue protein sequence, read N- to C-terminus: Threonine--tRNA ligase (648 aa).

Residues 1 to 61 (MINITFPDGA…TEDGSIEIVT (61 aa)) form the TGS domain. Positions 242-540 (DHRKLGKELD…LIENYKGAFP (299 aa)) are catalytic. Residues C336, H387, and H517 each contribute to the Zn(2+) site.

Belongs to the class-II aminoacyl-tRNA synthetase family. As to quaternary structure, homodimer. It depends on Zn(2+) as a cofactor.

Its subcellular location is the cytoplasm. The enzyme catalyses tRNA(Thr) + L-threonine + ATP = L-threonyl-tRNA(Thr) + AMP + diphosphate + H(+). Functionally, catalyzes the attachment of threonine to tRNA(Thr) in a two-step reaction: L-threonine is first activated by ATP to form Thr-AMP and then transferred to the acceptor end of tRNA(Thr). Also edits incorrectly charged L-seryl-tRNA(Thr). This Streptococcus thermophilus (strain ATCC BAA-250 / LMG 18311) protein is Threonine--tRNA ligase.